The primary structure comprises 481 residues: Putative F-box/FBD/LRR-repeat protein At5g25850 (481 aa).

Positions 19 to 69 constitute an F-box domain; it reads INRLSQLSDPLICQILSHLPIKEVVTTSVLSTRWKNIWLSVPSLELIYSIF. LRR repeat units lie at residues 123-151, 173-198, and 328-356; these read VRRV…KLFH, VWFP…KIDV, and HVTL…IVAF. Residues 401–452 enclose the FBD domain; that stretch reads QLSFSSVPKCLLSSLQFVELNAQILRFDGEILNLAKYFLENSSILQKLTLHP.

The sequence is that of Putative F-box/FBD/LRR-repeat protein At5g25850 from Arabidopsis thaliana (Mouse-ear cress).